The chain runs to 77 residues: Conotoxin Cl6.12 (77 aa).

Positions 1 to 20 (MKFYLLLTAALLLTAVIIEA) are cleaved as a signal peptide. A propeptide spanning residues 21-36 (APTDHQDEARDLMREE) is cleaved from the precursor. 3 disulfide bridges follow: Cys-43–Cys-58, Cys-51–Cys-62, and Cys-57–Cys-68.

As to expression, expressed by the venom duct.

Its subcellular location is the secreted. The sequence is that of Conotoxin Cl6.12 from Californiconus californicus (California cone).